We begin with the raw amino-acid sequence, 276 residues long: Large ribosomal subunit protein uL2c (276 aa).

Residues 225 to 256 are disordered; it reads NPVDHPHGGGEGRSPIGRPKPVSPWGKTALGA.

It belongs to the universal ribosomal protein uL2 family. In terms of assembly, part of the 50S ribosomal subunit.

The protein localises to the plastid. Its subcellular location is the chloroplast. In Mesostigma viride (Green alga), this protein is Large ribosomal subunit protein uL2c (rpl2).